The chain runs to 1394 residues: Ninein-like protein (1394 aa).

EF-hand domains lie at 8–43 (HYVS…LGLE) and 42–77 (LEEQ…VLSS). Disordered regions lie at residues 77-99 (SGSG…SCAV) and 126-166 (KYGS…KEPQ). At Ser-149 the chain carries Phosphoserine. Over residues 151-166 (ESLKSDEDAESAKEPQ) the composition is skewed to basic and acidic residues. EF-hand domains follow at residues 197 to 232 (TPEN…IGLH) and 234 to 269 (LEKQ…HEPP). 5 residues coordinate Ca(2+): Asp-247, Asp-249, Asp-251, Arg-253, and Glu-258. Coiled coils occupy residues 382-423 (RQEL…MDDC), 461-515 (WEQA…DSEK), and 544-584 (EQFT…SRQS). A KEN box motif is present at residues 494–496 (KEN). The disordered stretch occupies residues 578-602 (LPRSRQSPAGTPGTHRRRIPGRGPA). Positions 632–640 (RMQLETKVN) match the D-box motif. Positions 835 to 863 (EKEKLEQTYREQVEGLVQEADVLRALLKN) form a coiled coil. Polar residues predominate over residues 866–893 (TVVSDQQERTPSSMSLGPDSRQQPTARQ). The segment at 866-977 (TVVSDQQERT…SARTLTGQGQ (112 aa)) is disordered. Basic and acidic residues predominate over residues 939–951 (RSSENLGVRDNHQ). Coiled-coil stretches lie at residues 1057 to 1229 (SESE…ELTE) and 1269 to 1331 (GARV…LRKQ).

In terms of assembly, interacts with gamma-tubulin and TUBGCP4. Interacts with anaphase promoting complex/cyclosome (APC/C). Interacts with CDC20 and FZR1. Interacts with LCA5 and USH2A. Post-translationally, phosphorylated by PLK1 which disrupts its centrosome association and interaction with gamma-tubulin. Ubiquitinated by the APC/C complex leading to its degradation.

It localises to the cytoplasm. Its subcellular location is the cytoskeleton. It is found in the microtubule organizing center. The protein localises to the centrosome. Involved in the microtubule organization in interphase cells. Overexpression induces the fragmentation of the Golgi, and causes lysosomes to disperse toward the cell periphery; it also interferes with mitotic spindle assembly. Involved in vesicle transport in photoreceptor cells. The protein is Ninein-like protein (Ninl) of Mus musculus (Mouse).